The chain runs to 227 residues: 2-C-methyl-D-erythritol 4-phosphate cytidylyltransferase (227 aa).

This sequence belongs to the IspD/TarI cytidylyltransferase family. IspD subfamily.

The enzyme catalyses 2-C-methyl-D-erythritol 4-phosphate + CTP + H(+) = 4-CDP-2-C-methyl-D-erythritol + diphosphate. It functions in the pathway isoprenoid biosynthesis; isopentenyl diphosphate biosynthesis via DXP pathway; isopentenyl diphosphate from 1-deoxy-D-xylulose 5-phosphate: step 2/6. Functionally, catalyzes the formation of 4-diphosphocytidyl-2-C-methyl-D-erythritol from CTP and 2-C-methyl-D-erythritol 4-phosphate (MEP). The sequence is that of 2-C-methyl-D-erythritol 4-phosphate cytidylyltransferase from Dehalococcoides mccartyi (strain ATCC BAA-2266 / KCTC 15142 / 195) (Dehalococcoides ethenogenes (strain 195)).